The primary structure comprises 350 residues: Protein pelota homolog (350 aa).

This sequence belongs to the eukaryotic release factor 1 family. Pelota subfamily. As to quaternary structure, monomer. It depends on a divalent metal cation as a cofactor.

It is found in the cytoplasm. May function in recognizing stalled ribosomes, interact with stem-loop structures in stalled mRNA molecules, and effect endonucleolytic cleavage of the mRNA. May play a role in the release non-functional ribosomes and degradation of damaged mRNAs. Has endoribonuclease activity. The chain is Protein pelota homolog from Methanosarcina mazei (strain ATCC BAA-159 / DSM 3647 / Goe1 / Go1 / JCM 11833 / OCM 88) (Methanosarcina frisia).